A 287-amino-acid polypeptide reads, in one-letter code: CTD small phosphatase-like protein 3 (287 aa).

An FCP1 homology domain is found at 60 to 219 (RSTPEYTLVL…LKLCSFLEAI (160 aa)).

It belongs to the CTDSPL2 family.

In terms of biological role, probable phosphatase. The sequence is that of CTD small phosphatase-like protein 3 (scpl-3) from Caenorhabditis elegans.